Reading from the N-terminus, the 210-residue chain is Large ribosomal subunit protein uL3 (210 aa).

The interval G131 to M165 is disordered.

Belongs to the universal ribosomal protein uL3 family. In terms of assembly, part of the 50S ribosomal subunit. Forms a cluster with proteins L14 and L19.

Its function is as follows. One of the primary rRNA binding proteins, it binds directly near the 3'-end of the 23S rRNA, where it nucleates assembly of the 50S subunit. The polypeptide is Large ribosomal subunit protein uL3 (Caldanaerobacter subterraneus subsp. tengcongensis (strain DSM 15242 / JCM 11007 / NBRC 100824 / MB4) (Thermoanaerobacter tengcongensis)).